The primary structure comprises 407 residues: Multifunctional CCA protein (407 aa).

The ATP site is built by glycine 8 and arginine 11. CTP is bound by residues glycine 8 and arginine 11. Residues aspartate 21 and aspartate 23 each contribute to the Mg(2+) site. ATP-binding residues include arginine 91, arginine 137, and arginine 140. 3 residues coordinate CTP: arginine 91, arginine 137, and arginine 140. The HD domain occupies 228 to 329 (SGIHTLMVAQ…IKIFDKMDVW (102 aa)).

It belongs to the tRNA nucleotidyltransferase/poly(A) polymerase family. Bacterial CCA-adding enzyme type 1 subfamily. In terms of assembly, monomer. Can also form homodimers and oligomers. It depends on Mg(2+) as a cofactor. Ni(2+) is required as a cofactor.

The enzyme catalyses a tRNA precursor + 2 CTP + ATP = a tRNA with a 3' CCA end + 3 diphosphate. It carries out the reaction a tRNA with a 3' CCA end + 2 CTP + ATP = a tRNA with a 3' CCACCA end + 3 diphosphate. Its function is as follows. Catalyzes the addition and repair of the essential 3'-terminal CCA sequence in tRNAs without using a nucleic acid template. Adds these three nucleotides in the order of C, C, and A to the tRNA nucleotide-73, using CTP and ATP as substrates and producing inorganic pyrophosphate. tRNA 3'-terminal CCA addition is required both for tRNA processing and repair. Also involved in tRNA surveillance by mediating tandem CCA addition to generate a CCACCA at the 3' terminus of unstable tRNAs. While stable tRNAs receive only 3'-terminal CCA, unstable tRNAs are marked with CCACCA and rapidly degraded. The sequence is that of Multifunctional CCA protein from Aliivibrio fischeri (strain MJ11) (Vibrio fischeri).